The primary structure comprises 174 residues: NADH-ubiquinone oxidoreductase chain 6 (174 aa).

4 consecutive transmembrane segments (helical) span residues 24–44, 53–73, 82–102, and 143–163; these read LALG…TGLM, ILFL…TSLA, MKLT…SFIM, and FITI…VKIT.

This sequence belongs to the complex I subunit 6 family.

The protein localises to the mitochondrion membrane. The enzyme catalyses a ubiquinone + NADH + 5 H(+)(in) = a ubiquinol + NAD(+) + 4 H(+)(out). In terms of biological role, core subunit of the mitochondrial membrane respiratory chain NADH dehydrogenase (Complex I) that is believed to belong to the minimal assembly required for catalysis. Complex I functions in the transfer of electrons from NADH to the respiratory chain. The immediate electron acceptor for the enzyme is believed to be ubiquinone. The polypeptide is NADH-ubiquinone oxidoreductase chain 6 (mt:ND6) (Drosophila melanogaster (Fruit fly)).